A 295-amino-acid chain; its full sequence is Glycine N-methyltransferase (295 aa).

Residues Ser4 and Tyr6 each contribute to the (6S)-5-methyl-5,6,7,8-tetrahydrofolate site. Ser10 carries the phosphoserine modification. Tyr22, Trp31, Tyr34, and Arg41 together coordinate S-adenosyl-L-methionine. Tyr34 is modified (phosphotyrosine). Lys46 is subject to N6-succinyllysine. S-adenosyl-L-methionine is bound by residues Ala65, 86–88 (DAS), 117–118 (NW), 139–142 (LGNS), and Arg178. An N6-succinyllysine mark is found at Lys193, Lys198, and Lys203. His217 lines the (6S)-5-methyl-5,6,7,8-tetrahydrofolate pocket. Tyr223 serves as a coordination point for S-adenosyl-L-methionine. Arg242 is a binding site for (6S)-5-methyl-5,6,7,8-tetrahydrofolate.

Belongs to the class I-like SAM-binding methyltransferase superfamily. Glycine N-methyltransferase family. In terms of assembly, homotetramer. Abundant in liver.

It localises to the cytoplasm. The catalysed reaction is glycine + S-adenosyl-L-methionine = sarcosine + S-adenosyl-L-homocysteine + H(+). Inhibited by 5-methyltetrahydrofolate monoglutamate and by 5-methyltetrahydrofolate pentaglutamate, inhibition is much more effective by the pentaglutamate form than by the monoglutamate form. Two molecules of 5-methyltetrahydrofolate are bound per tetramer. The binding sites are localized between subunits. Inhibitor binding may preclude movements of the polypeptide chain that are necessary for enzyme activity. Its function is as follows. Catalyzes the methylation of glycine by using S-adenosylmethionine (AdoMet) to form N-methylglycine (sarcosine) with the concomitant production of S-adenosylhomocysteine (AdoHcy), a reaction regulated by the binding of 5-methyltetrahydrofolate. Plays an important role in the regulation of methyl group metabolism by regulating the ratio between S-adenosyl-L-methionine and S-adenosyl-L-homocysteine. This is Glycine N-methyltransferase (GNMT) from Oryctolagus cuniculus (Rabbit).